The sequence spans 129 residues: ATP synthase epsilon chain (129 aa).

The protein belongs to the ATPase epsilon chain family. As to quaternary structure, F-type ATPases have 2 components, CF(1) - the catalytic core - and CF(0) - the membrane proton channel. CF(1) has five subunits: alpha(3), beta(3), gamma(1), delta(1), epsilon(1). CF(0) has three main subunits: a, b and c.

Its subcellular location is the cell inner membrane. Functionally, produces ATP from ADP in the presence of a proton gradient across the membrane. This is ATP synthase epsilon chain from Nitratiruptor sp. (strain SB155-2).